A 523-amino-acid polypeptide reads, in one-letter code: 2-isopropylmalate synthase (523 aa).

The 263-residue stretch at 5–267 (VIIFDTTLRD…HTNINHHEIW (263 aa)) folds into the Pyruvate carboxyltransferase domain. Residues Asp-14, His-202, His-204, and Asn-238 each coordinate Mn(2+). The interval 392–523 (RLDYFSVQSG…QNKENNKETV (132 aa)) is regulatory domain.

Belongs to the alpha-IPM synthase/homocitrate synthase family. LeuA type 1 subfamily. Homodimer. Mn(2+) serves as cofactor.

Its subcellular location is the cytoplasm. It catalyses the reaction 3-methyl-2-oxobutanoate + acetyl-CoA + H2O = (2S)-2-isopropylmalate + CoA + H(+). It functions in the pathway amino-acid biosynthesis; L-leucine biosynthesis; L-leucine from 3-methyl-2-oxobutanoate: step 1/4. Its function is as follows. Catalyzes the condensation of the acetyl group of acetyl-CoA with 3-methyl-2-oxobutanoate (2-ketoisovalerate) to form 3-carboxy-3-hydroxy-4-methylpentanoate (2-isopropylmalate). In Salmonella choleraesuis (strain SC-B67), this protein is 2-isopropylmalate synthase.